Reading from the N-terminus, the 1306-residue chain is Disease resistance protein Roq1 (1306 aa).

Positions 10-179 (RSYDVFLSFR…QILKDIFDKF (170 aa)) constitute a TIR domain. Residues 19–24 (RGEDTR) and G52 each bind NAD(+). Residue E86 is part of the active site. Residues 198–417 (KKLSSLLRMD…IDRLKDNPEG (220 aa)) form the NB-ARC domain. LRR repeat units lie at residues 200–224 (LSSL…GVGK), 252–275 (LQHH…EFVD), 417–440 (GEIM…IFLD), 599–622 (PSKL…AKRL), 645–669 (ITNL…VGFL), 670–693 (KNLI…IQSE), 716–739 (MTHL…IEHL), 741–763 (SLEN…IWRF), 784–807 (SNCT…IGNL), 808–831 (TSLN…IWGL), 832–857 (TSLT…AINH), 878–902 (LDLL…IWML), 904–926 (FLRI…LGHL), 927–949 (EHLE…VARL), 961–983 (FAIG…VFGS), 987–1010 (LGSV…MNQL), 1013–1036 (LEYL…SIKE), and 1045–1070 (LRIM…EYQN).

It belongs to the disease resistance TIR-NB-LRR family. As to quaternary structure, homodimer.

It catalyses the reaction NAD(+) + H2O = ADP-D-ribose + nicotinamide + H(+). It carries out the reaction NAD(+) = 2'cADPR + nicotinamide + H(+). Its function is as follows. Disease resistance (R) protein that specifically recognizes the Xanthomonas and Pseudomonas effector proteins XopQ and HopQ1, and triggers cell death. An NAD(+) hydrolase (NADase): in response to activation, catalyzes cleavage of NAD(+) into ADP-D-ribose (ADPR) and nicotinamide; NAD(+) cleavage triggers a defense system that promotes cell death. Makes small amounts of 2' cyclic ADPR (2'cADPR). This is Disease resistance protein Roq1 from Nicotiana benthamiana.